Reading from the N-terminus, the 412-residue chain is Protein MITOFERRINLIKE 1, chloroplastic (412 aa).

Residues 1-92 (MEARLSETLG…PGPEFLKWIK (92 aa)) constitute a chloroplast transit peptide. Positions 43–83 (VRNPKLKTKSSQKPPKFSANFRRSDPPFASTSISDPTHEKP) are disordered. 3 Solcar repeats span residues 112–198 (ERAI…GKSL), 206–288 (PTVL…LKAA), and 298–392 (LEPL…ARLT). Transmembrane regions (helical) follow at residues 115–135 (IIGA…LLPL), 167–187 (ILGF…SSAV), 208–228 (VLIP…IMVP), 262–282 (AGYS…YSSF), 303–323 (SVCC…PLDV), and 365–385 (TRGM…GYFA).

The protein belongs to the mitochondrial carrier (TC 2.A.29) family. Expressed in leaves, developing flowers and siliques.

It is found in the plastid. The protein localises to the chloroplast inner membrane. Functionally, probably involved in iron transport into chloroplasts. This Arabidopsis thaliana (Mouse-ear cress) protein is Protein MITOFERRINLIKE 1, chloroplastic (MFL1).